The chain runs to 338 residues: Heat-inducible transcription repressor HrcA (338 aa).

This sequence belongs to the HrcA family.

Its function is as follows. Negative regulator of class I heat shock genes (grpE-dnaK-dnaJ and groELS operons). Prevents heat-shock induction of these operons. This Thermotoga sp. (strain RQ2) protein is Heat-inducible transcription repressor HrcA.